The sequence spans 227 residues: UPF0173 metal-dependent hydrolase Bcer98_3294 (227 aa).

This sequence belongs to the UPF0173 family.

The polypeptide is UPF0173 metal-dependent hydrolase Bcer98_3294 (Bacillus cytotoxicus (strain DSM 22905 / CIP 110041 / 391-98 / NVH 391-98)).